Here is a 338-residue protein sequence, read N- to C-terminus: L-lysine 2,3-aminomutase (338 aa).

The Radical SAM core domain maps to 107–330 (HKYRNRLLFM…PKLAREIAGE (224 aa)). Residues Cys-121, Cys-125, and Cys-128 each contribute to the [4Fe-4S] cluster site. Lys-333 carries the N6-(pyridoxal phosphate)lysine modification.

It belongs to the radical SAM superfamily. KamA family. Requires [4Fe-4S] cluster as cofactor. The cofactor is pyridoxal 5'-phosphate.

The catalysed reaction is L-lysine = D-beta-lysine. Its function is as follows. With EpmA is involved in the beta-lysylation step of the post-translational modification of translation elongation factor P (EF-P) on 'Lys-34'. EpmB appears to act before EpmA. Displays lysine 2,3-aminomutase activity, producing (R)-beta-lysine from (S)-alpha-lysine (L-lysine). In Haemophilus influenzae (strain ATCC 51907 / DSM 11121 / KW20 / Rd), this protein is L-lysine 2,3-aminomutase (epmB).